Consider the following 361-residue polypeptide: Biotin synthase (361 aa).

The region spanning 47–278 (VHGDEVALCG…AAHIFVMGGR (232 aa)) is the Radical SAM core domain. [4Fe-4S] cluster contacts are provided by cysteine 65, cysteine 69, and cysteine 72. 3 residues coordinate [2Fe-2S] cluster: serine 110, cysteine 143, and cysteine 203.

This sequence belongs to the radical SAM superfamily. Biotin synthase family. Homodimer. Requires [4Fe-4S] cluster as cofactor. It depends on [2Fe-2S] cluster as a cofactor.

It catalyses the reaction (4R,5S)-dethiobiotin + (sulfur carrier)-SH + 2 reduced [2Fe-2S]-[ferredoxin] + 2 S-adenosyl-L-methionine = (sulfur carrier)-H + biotin + 2 5'-deoxyadenosine + 2 L-methionine + 2 oxidized [2Fe-2S]-[ferredoxin]. The protein operates within cofactor biosynthesis; biotin biosynthesis; biotin from 7,8-diaminononanoate: step 2/2. Functionally, catalyzes the conversion of dethiobiotin (DTB) to biotin by the insertion of a sulfur atom into dethiobiotin via a radical-based mechanism. In Anaeromyxobacter dehalogenans (strain 2CP-C), this protein is Biotin synthase.